Here is a 271-residue protein sequence, read N- to C-terminus: Formamidopyrimidine-DNA glycosylase (271 aa).

Pro-2 serves as the catalytic Schiff-base intermediate with DNA. Glu-3 (proton donor) is an active-site residue. Catalysis depends on Lys-57, which acts as the Proton donor; for beta-elimination activity. His-90, Arg-109, and Lys-151 together coordinate DNA. The segment at 236-270 (HVYGRGGETCTQCGNLLSEIRLGQRTTVFCSICQP) adopts an FPG-type zinc-finger fold. The Proton donor; for delta-elimination activity role is filled by Arg-260.

It belongs to the FPG family. In terms of assembly, monomer. Requires Zn(2+) as cofactor.

The catalysed reaction is Hydrolysis of DNA containing ring-opened 7-methylguanine residues, releasing 2,6-diamino-4-hydroxy-5-(N-methyl)formamidopyrimidine.. It catalyses the reaction 2'-deoxyribonucleotide-(2'-deoxyribose 5'-phosphate)-2'-deoxyribonucleotide-DNA = a 3'-end 2'-deoxyribonucleotide-(2,3-dehydro-2,3-deoxyribose 5'-phosphate)-DNA + a 5'-end 5'-phospho-2'-deoxyribonucleoside-DNA + H(+). Its function is as follows. Involved in base excision repair of DNA damaged by oxidation or by mutagenic agents. Acts as a DNA glycosylase that recognizes and removes damaged bases. Has a preference for oxidized purines, such as 7,8-dihydro-8-oxoguanine (8-oxoG). Has AP (apurinic/apyrimidinic) lyase activity and introduces nicks in the DNA strand. Cleaves the DNA backbone by beta-delta elimination to generate a single-strand break at the site of the removed base with both 3'- and 5'-phosphates. The sequence is that of Formamidopyrimidine-DNA glycosylase from Shewanella oneidensis (strain ATCC 700550 / JCM 31522 / CIP 106686 / LMG 19005 / NCIMB 14063 / MR-1).